We begin with the raw amino-acid sequence, 153 residues long: Ribosome maturation factor RimP (153 aa).

The protein belongs to the RimP family.

The protein localises to the cytoplasm. Its function is as follows. Required for maturation of 30S ribosomal subunits. In Clostridium botulinum (strain ATCC 19397 / Type A), this protein is Ribosome maturation factor RimP.